The following is a 286-amino-acid chain: ATP synthase gamma chain (286 aa).

This sequence belongs to the ATPase gamma chain family. In terms of assembly, F-type ATPases have 2 components, CF(1) - the catalytic core - and CF(0) - the membrane proton channel. CF(1) has five subunits: alpha(3), beta(3), gamma(1), delta(1), epsilon(1). CF(0) has three main subunits: a, b and c.

Its subcellular location is the cell inner membrane. In terms of biological role, produces ATP from ADP in the presence of a proton gradient across the membrane. The gamma chain is believed to be important in regulating ATPase activity and the flow of protons through the CF(0) complex. This chain is ATP synthase gamma chain, found in Solibacter usitatus (strain Ellin6076).